Here is a 124-residue protein sequence, read N- to C-terminus: p53-regulated apoptosis-inducing protein 1 (124 aa).

Residues 1–16 (MGSSSEASFRSAQASC) are compositionally biased toward polar residues. The interval 1–46 (MGSSSEASFRSAQASCSGARRQGLGRGDQNLSVMPPNGRAQTHTPG) is disordered.

In terms of tissue distribution, only found to be expressed in thymus.

It localises to the mitochondrion. Functionally, may play an important role in mediating p53/TP53-dependent apoptosis. This chain is p53-regulated apoptosis-inducing protein 1 (TP53AIP1), found in Homo sapiens (Human).